Here is a 256-residue protein sequence, read N- to C-terminus: Enolase-phosphatase E1 (256 aa).

Mg(2+)-binding residues include D14 and E16. Substrate-binding positions include 142 to 143 (SS) and K176. D201 is a binding site for Mg(2+).

The protein belongs to the HAD-like hydrolase superfamily. MasA/MtnC family. As to quaternary structure, monomer. Mg(2+) is required as a cofactor.

The protein resides in the cytoplasm. Its subcellular location is the nucleus. The enzyme catalyses 5-methylsulfanyl-2,3-dioxopentyl phosphate + H2O = 1,2-dihydroxy-5-(methylsulfanyl)pent-1-en-3-one + phosphate. Its pathway is amino-acid biosynthesis; L-methionine biosynthesis via salvage pathway; L-methionine from S-methyl-5-thio-alpha-D-ribose 1-phosphate: step 3/6. The protein operates within amino-acid biosynthesis; L-methionine biosynthesis via salvage pathway; L-methionine from S-methyl-5-thio-alpha-D-ribose 1-phosphate: step 4/6. Functionally, bifunctional enzyme that catalyzes the enolization of 2,3-diketo-5-methylthiopentyl-1-phosphate (DK-MTP-1-P) into the intermediate 2-hydroxy-3-keto-5-methylthiopentenyl-1-phosphate (HK-MTPenyl-1-P), which is then dephosphorylated to form the acireductone 1,2-dihydroxy-3-keto-5-methylthiopentene (DHK-MTPene). In Drosophila simulans (Fruit fly), this protein is Enolase-phosphatase E1.